The primary structure comprises 344 residues: Interferon gamma receptor 1-like (344 aa).

Positions 1 to 22 are cleaved as a signal peptide; that stretch reads MSKHAVVQFGVVYALLFPGVFG. The Extracellular portion of the chain corresponds to 23 to 229; sequence FVPSPTNVSV…QPTPETDKTG (207 aa). The 79-residue stretch at 24–102 folds into the Fibronectin type-III domain; sequence VPSPTNVSVV…TAHDGQEKSE (79 aa). Asparagine 29, asparagine 44, asparagine 132, and asparagine 189 each carry an N-linked (GlcNAc...) asparagine glycan. A helical transmembrane segment spans residues 230 to 250; it reads IIAALIGGATVVLFIIMGFVW. Residues 251 to 344 lie on the Cytoplasmic side of the membrane; the sequence is LLWRKWSNIP…SSDYDRPKFL (94 aa). A disordered region spans residues 300–344; the sequence is TEEDQSVSARDDTGADPPVVSEEGMAGEDSQGLGCSSDYDRPKFL.

This sequence belongs to the type II cytokine receptor family. As to expression, highly expressed in brain. Also detected in spleen, heart, intestine, gill and kidney. In immune cell populations, detected at low levels in monocytes, peripheral blood leukocytes, splenocytes, neutrophils and mature macrophages.

It localises to the cell membrane. In terms of biological role, receptor which shows binding specificity for the cytokine ifng1 (interferon gamma 1). This Carassius auratus (Goldfish) protein is Interferon gamma receptor 1-like.